The sequence spans 311 residues: Geranylgeranyl transferase type-2 subunit alpha (311 aa).

A coiled-coil region spans residues 12–43 (EKAKAQRLKELEKIESYNKLVKSFEELREKQN). PFTA repeat units lie at residues 49 to 82 (ISLSVSKLVLIENPEFYTIWNYRRLAILQFTETK), 93 to 126 (NEMKFLEECIQRFTKSYWIWFHRQWIALRMDNCD), 129 to 162 (REMKLCTKLLNFDLRNFHCWGHRRFILKHSNIKL), 164 to 197 (DELKYTTEKVEQNFSNYSAWHQRSSILPKIYKEP), and 206 to 239 (EEFELVRNAVYTEPKDSSSWIYHKWLVATIKSIP).

This sequence belongs to the protein prenyltransferase subunit alpha family. Heterodimer of an alpha and a beta subunit.

It carries out the reaction geranylgeranyl diphosphate + L-cysteinyl-[protein] = S-geranylgeranyl-L-cysteinyl-[protein] + diphosphate. Catalyzes the transfer of a geranylgeranyl moiety from geranylgeranyl diphosphate to proteins with a C-terminal sequence motif -XCC or -XCXC, where both cysteines may become modified. This Dictyostelium discoideum (Social amoeba) protein is Geranylgeranyl transferase type-2 subunit alpha (rabggta).